A 266-amino-acid chain; its full sequence is Oxidoreductase aflX (266 aa).

This sequence belongs to the avfA family.

The protein operates within mycotoxin biosynthesis; aflatoxin biosynthesis. Its function is as follows. Oxidoreductase; part of the gene cluster that mediates the biosynthesis of aflatoxins, a group of polyketide-derived furanocoumarins, and part of the most toxic and carcinogenic compounds among the known mycotoxins. The four major aflatoxins produced by A.parasiticus are aflatoxin B1 (AFB1), aflatoxin B2 (AFB2), aflatoxin G1 (AFG1) and aflatoxin G2 (AFG2). Within the aflatoxin pathway, the oxidoreductase aflX seems to be involved in the conversion of versicolorin A (VERA) to demethylsterigmatocystin (DMST), through probable epoxide ring-opening step following versicolorin A oxidation required for the formation of the xanthone ring. The biosynthesis of aflatoxins begins with the norsolorinic acid synthase aflC that combines a hexanoyl starter unit produced by the fatty acid synthase aflA/aflB and 7 malonyl-CoA extender units to synthesize the precursor NOR. The second step is the conversion of NOR to averantin and requires the norsolorinic acid ketoreductase aflD, which catalyzes the dehydration of norsolorinic acid to form (1'S)-averantin. The norsolorinic acid reductases aflE and aflF may also play a role in the conversion of NOR to AVN. The cytochrome P450 monooxygenase aflG then catalyzes the hydroxylation of AVN to 5'hydroxyaverantin (HAVN). The next step is performed by the 5'-hydroxyaverantin dehydrogenase aflH that transforms HAVN to 5'-oxoaverantin (OAVN) which is further converted to averufin (AVF) by aflK that plays a dual role in the pathway, as a 5'-oxoaverantin cyclase that mediates conversion of 5'-oxoaverantin, as well as a versicolorin B synthase in a later step in the pathway. The averufin oxidase aflI catalyzes the conversion of AVF to versiconal hemiacetal acetate (VHA). VHA is then the substrate for the versiconal hemiacetal acetate esterase aflJ to yield versiconal (VAL). Versicolorin B synthase aflK then converts VAL to versicolorin B (VERB) by closing the bisfuran ring of aflatoxin which is required for DNA-binding, thus giving to aflatoxin its activity as a mutagen. Then, the activity of the versicolorin B desaturase aflL leads to versicolorin A (VERA). A branch point starts from VERB since it can also be converted to dihydrodemethylsterigmatocystin (DMDHST), probably also by aflL, VERA being a precursor for aflatoxins B1 and G1, and DMDHST for aflatoxins B2 and G2. Next, the versicolorin reductase aflM and the cytochrome P450 monooxygenase aflN are involved in conversion of VERA to demethylsterigmatocystin (DMST). AflX and aflY seem also involved in this step, through probable aflX-mediated epoxide ring-opening step following versicolorin A oxidation and aflY-mediated Baeyer-Villiger oxidation required for the formation of the xanthone ring. The methyltransferase aflO then leads to the modification of DMST to sterigmatocystin (ST), and of DMDHST to dihydrosterigmatocystin (DHST). Both ST and DHST are then substrates of the O-methyltransferase aflP to yield O-methylsterigmatocystin (OMST) and dihydro-O-methylsterigmatocystin (DHOMST), respectively. Finally OMST is converted to aflatoxins B1 and G1, and DHOMST to aflatoxins B2 and G2, via the action of several enzymes including O-methylsterigmatocystin oxidoreductase aflQ, the cytochrome P450 monooxygenase aflU, but also the NADH-dependent flavin oxidoreductase nadA which is specifically required for the synthesis of AFG1. This chain is Oxidoreductase aflX, found in Aspergillus parasiticus (strain ATCC 56775 / NRRL 5862 / SRRC 143 / SU-1).